The primary structure comprises 158 residues: uncharacterized protein (158 aa).

2 disordered regions span residues 1–86 and 138–158; these read MDFR…DHWW and ASQV…LLGF. Low complexity predominate over residues 7–76; that stretch reads SPTTCTTPAS…PTPASSGSAA (70 aa).

This is an uncharacterized protein from Homo sapiens (Human).